The primary structure comprises 473 residues: Bactericidal permeability-increasing protein (473 aa).

The signal sequence occupies residues 1-18 (MVLCCWLALVALIPMTLS). The tract at residues 19–29 (INPGVKVRLTG) is central sheet, part 1. Residues 28 to 209 (TGKGLEYGRQ…SDLNPQLKTL (182 aa)) form an N-terminal barrel region. Cys-153 and Cys-192 are disulfide-bonded. The interval 211 to 275 (VLAKVDQYAE…INNMLYISVS (65 aa)) is central sheet, part 2. The segment at 225–230 (MVSSPT) is cleavage sites for elastase. The interval 276-446 (AFTINSAAFV…LAKGYPLPTL (171 aa)) is C-terminal barrel. An N-linked (GlcNAc...) asparagine glycan is attached at Asn-365. The central sheet, part 3 stretch occupies residues 453-472 (NTELQVLKDYMLIGTDVQFT).

The protein belongs to the BPI/LBP/Plunc superfamily. BPI/LBP family. In terms of assembly, monomer. Homodimer; disulfide-linked. In terms of tissue distribution, expressed in spleen. Lower expression in gill, head kidney, entire kidney, skin, intestine and blood and lowest expression in liver and muscle.

Its subcellular location is the secreted. Functionally, the cytotoxic action of BPI is limited to many species of Gram-negative bacteria; this specificity may be explained by a strong affinity of the very basic N-terminal half for the negatively charged lipopolysaccharides that are unique to the Gram-negative bacterial outer envelope. Exhibits neutralizing capacity towards P.aeruginosa lipopolysaccharides (LPS) and has bactericidal activity against multiple drug resistant (MDR) P.aeruginosa strains derived from people with cystic fibrosis. Has antibacterial activity against E.coli, but not against S.iniae. In Sebastes schlegelii (Korean rockfish), this protein is Bactericidal permeability-increasing protein.